The primary structure comprises 422 residues: Choline monooxygenase, chloroplastic (422 aa).

The N-terminal 47 residues, 1–47 (MMTTLTATVPEFLPPSLKSTRGYFNSHSEFGVSISKFSRRRFHNPTR), are a transit peptide targeting the chloroplast. A Rieske domain is found at 96-203 (WQAVGYSDQI…VAVWGPFVLL (108 aa)). 4 residues coordinate [2Fe-2S] cluster: Cys138, His140, Cys157, and His160. The Fe cation site is built by His269 and His274.

This sequence belongs to the choline monooxygenase family. [2Fe-2S] cluster serves as cofactor. The cofactor is Fe cation. Requires Mg(2+) as cofactor.

It localises to the plastid. It is found in the chloroplast stroma. It catalyses the reaction choline + 2 reduced [2Fe-2S]-[ferredoxin] + O2 + 2 H(+) = betaine aldehyde hydrate + 2 oxidized [2Fe-2S]-[ferredoxin] + H2O. The protein operates within amine and polyamine biosynthesis; betaine biosynthesis via choline pathway; betaine aldehyde from choline (monooxygenase route): step 1/1. Functionally, catalyzes the first step of the osmoprotectant glycine betaine synthesis. The chain is Choline monooxygenase, chloroplastic from Arabidopsis thaliana (Mouse-ear cress).